The primary structure comprises 252 residues: Triosephosphate isomerase (252 aa).

Residue 9–11 (NWK) coordinates substrate. His95 acts as the Electrophile in catalysis. Residue Glu167 is the Proton acceptor of the active site. Substrate-binding positions include Gly173, Ser211, and 232 to 233 (GG).

It belongs to the triosephosphate isomerase family. In terms of assembly, homodimer.

It localises to the cytoplasm. It catalyses the reaction D-glyceraldehyde 3-phosphate = dihydroxyacetone phosphate. It participates in carbohydrate biosynthesis; gluconeogenesis. The protein operates within carbohydrate degradation; glycolysis; D-glyceraldehyde 3-phosphate from glycerone phosphate: step 1/1. In terms of biological role, involved in the gluconeogenesis. Catalyzes stereospecifically the conversion of dihydroxyacetone phosphate (DHAP) to D-glyceraldehyde-3-phosphate (G3P). This chain is Triosephosphate isomerase, found in Marinobacter nauticus (strain ATCC 700491 / DSM 11845 / VT8) (Marinobacter aquaeolei).